Reading from the N-terminus, the 166-residue chain is UBA-like domain-containing protein 2-A (166 aa).

Residues 120-166 (QQPVWLPPASPTTHLHHHHHHPQPVWPPNSQPTGGPQKAMAAMDGQR) are disordered.

This sequence belongs to the UBALD family.

This Xenopus laevis (African clawed frog) protein is UBA-like domain-containing protein 2-A (ubald2-a).